The primary structure comprises 396 residues: MAAPSVSCGAAVPYRLFLAGRVSFAREQGLWKAAASGLQTGTRCQILRLKHSPAVTTTKNVAALRRESYTVDFIKKQIEEFNIGKRHLANMMGEDPETFTQEDVDRAITYLFPSGLFEKRARPIMKHPEEIFPKQRAVQWGEDGRPFHFLFYTGKQSYYSLMHEAYGKVLHAEERQDQLRAKGLFSEKSKSKDLIGSRWLIKEELEEMLVEKLSDQDYAQFIRLLERLSALPCDAAEEEFVGRFRRTVTVQSKKHLIEPLQYDEQGMAFSTGQGKRKTANAEAVVYGHGSGKIEINGVDYLLYFPVTQDREQLMFPFHFLDRLGKHDVTCTVSGGGRSSQAGAIRLAMSRALCSFITEDEVEWMRQAGLLTTDPRVRERKKPGQEGARRKFTWKKR.

The interval 374–396 is disordered; sequence PRVRERKKPGQEGARRKFTWKKR.

Belongs to the universal ribosomal protein uS9 family. Component of the mitochondrial ribosome small subunit (28S) which comprises a 12S rRNA and about 30 distinct proteins.

It is found in the mitochondrion. The sequence is that of Small ribosomal subunit protein uS9m (MRPS9) from Bos taurus (Bovine).